Here is a 75-residue protein sequence, read N- to C-terminus: Bacteriocin lactococcin-A (75 aa).

Positions 1 to 21 (MKNQLNFNIVSDEELSEANGG) are excised as a propeptide. Residues 30–52 (AAGDLYYNTNTHKYVYQQTQNAF) traverse the membrane as a helical segment.

The protein localises to the secreted. It is found in the host cell membrane. In terms of biological role, kills Lactococci. The polypeptide is Bacteriocin lactococcin-A (lcnA) (Lactococcus lactis subsp. cremoris (Streptococcus cremoris)).